Consider the following 154-residue polypeptide: NADPH-dependent 7-cyano-7-deazaguanine reductase (154 aa).

Residues 1-24 form a disordered region; the sequence is MPKTDVSGLSQLGTKVDLPQSPEE. The active-site Thioimide intermediate is cysteine 52. The active-site Proton donor is aspartate 59. Substrate contacts are provided by residues 74–76 and 93–94; these read VES and HE.

Belongs to the GTP cyclohydrolase I family. QueF type 1 subfamily.

The protein resides in the cytoplasm. The enzyme catalyses 7-aminomethyl-7-carbaguanine + 2 NADP(+) = 7-cyano-7-deazaguanine + 2 NADPH + 3 H(+). Its pathway is tRNA modification; tRNA-queuosine biosynthesis. Its function is as follows. Catalyzes the NADPH-dependent reduction of 7-cyano-7-deazaguanine (preQ0) to 7-aminomethyl-7-deazaguanine (preQ1). This Sinorhizobium fredii (strain NBRC 101917 / NGR234) protein is NADPH-dependent 7-cyano-7-deazaguanine reductase.